The primary structure comprises 346 residues: tRNA N6-adenosine threonylcarbamoyltransferase (346 aa).

Residues His111 and His115 each coordinate Fe cation. Residues Leu134–Gly138, Asp167, Gly180, and Asn277 contribute to the substrate site. Fe cation is bound at residue Asp305.

This sequence belongs to the KAE1 / TsaD family. Requires Fe(2+) as cofactor.

Its subcellular location is the cytoplasm. It catalyses the reaction L-threonylcarbamoyladenylate + adenosine(37) in tRNA = N(6)-L-threonylcarbamoyladenosine(37) in tRNA + AMP + H(+). Required for the formation of a threonylcarbamoyl group on adenosine at position 37 (t(6)A37) in tRNAs that read codons beginning with adenine. Is involved in the transfer of the threonylcarbamoyl moiety of threonylcarbamoyl-AMP (TC-AMP) to the N6 group of A37, together with TsaE and TsaB. TsaD likely plays a direct catalytic role in this reaction. This is tRNA N6-adenosine threonylcarbamoyltransferase from Bordetella pertussis (strain Tohama I / ATCC BAA-589 / NCTC 13251).